A 156-amino-acid chain; its full sequence is Protein-export protein SecB (156 aa).

This sequence belongs to the SecB family. As to quaternary structure, homotetramer, a dimer of dimers. One homotetramer interacts with 1 SecA dimer.

It is found in the cytoplasm. One of the proteins required for the normal export of preproteins out of the cell cytoplasm. It is a molecular chaperone that binds to a subset of precursor proteins, maintaining them in a translocation-competent state. It also specifically binds to its receptor SecA. This Paraburkholderia phymatum (strain DSM 17167 / CIP 108236 / LMG 21445 / STM815) (Burkholderia phymatum) protein is Protein-export protein SecB.